Consider the following 511-residue polypeptide: V-type proton ATPase subunit B, brain isoform (511 aa).

Arginine 400 is an ATP binding site.

This sequence belongs to the ATPase alpha/beta chains family. V-ATPase is a heteromultimeric enzyme made up of two complexes: the ATP-hydrolytic V1 complex and the proton translocation V0 complex. The V1 complex consists of three catalytic AB heterodimers that form a heterohexamer, three peripheral stalks each consisting of EG heterodimers, one central rotor including subunits D and F, and the regulatory subunits C and H. The proton translocation complex V0 consists of the proton transport subunit a, a ring of proteolipid subunits c9c'', rotary subunit d, subunits e and f, and the accessory subunits ATP6AP1/Ac45 and ATP6AP2/PRR. Expressed in brain (at protein level). Expressed in all tissues tested, but highest in brain and in adrenal medulla.

The protein localises to the apical cell membrane. It localises to the melanosome. Its subcellular location is the cytoplasm. The protein resides in the cytoplasmic vesicle. It is found in the clathrin-coated vesicle membrane. The protein localises to the secretory vesicle. It localises to the synaptic vesicle membrane. Non-catalytic subunit of the V1 complex of vacuolar(H+)-ATPase (V-ATPase), a multisubunit enzyme composed of a peripheral complex (V1) that hydrolyzes ATP and a membrane integral complex (V0) that translocates protons. V-ATPase is responsible for acidifying and maintaining the pH of intracellular compartments and in some cell types, is targeted to the plasma membrane, where it is responsible for acidifying the extracellular environment. In renal intercalated cells, can partially compensate the lack of ATP6V1B1 and mediate secretion of protons (H+) into the urine under base-line conditions but not in conditions of acid load. This is V-type proton ATPase subunit B, brain isoform (ATP6V1B2) from Bos taurus (Bovine).